The chain runs to 148 residues: MCPPVRQHPAQAPPAKRQALETVPHPQNRGRLMSPKARPPKMQRRPRPPVAKRRRFPRSPQQVERPILPPVESTPQDMEPGQVQSPPQITAVIQLRQDRDTMRPPIYLPALLANCGPAGLLRAHRLPQPKPPCQSRQRPSPDSQTSPC.

2 disordered regions span residues 1 to 86 (MCPP…VQSP) and 122 to 148 (RAHRLPQPKPPCQSRQRPSPDSQTSPC). A compositionally biased stretch (basic residues) spans 38–57 (RPPKMQRRPRPPVAKRRRFP). Polar residues predominate over residues 134–148 (QSRQRPSPDSQTSPC).

Belongs to the Epstein-Barr virus BLLF2 family.

This is an uncharacterized protein from Homo sapiens (Human).